A 123-amino-acid polypeptide reads, in one-letter code: Ribosome-binding factor A (123 aa).

It belongs to the RbfA family. In terms of assembly, monomer. Binds 30S ribosomal subunits, but not 50S ribosomal subunits or 70S ribosomes.

It is found in the cytoplasm. One of several proteins that assist in the late maturation steps of the functional core of the 30S ribosomal subunit. Associates with free 30S ribosomal subunits (but not with 30S subunits that are part of 70S ribosomes or polysomes). Required for efficient processing of 16S rRNA. May interact with the 5'-terminal helix region of 16S rRNA. The protein is Ribosome-binding factor A of Cupriavidus taiwanensis (strain DSM 17343 / BCRC 17206 / CCUG 44338 / CIP 107171 / LMG 19424 / R1) (Ralstonia taiwanensis (strain LMG 19424)).